The sequence spans 451 residues: tRNA-2-methylthio-N(6)-dimethylallyladenosine synthase (451 aa).

Residues 3 to 120 enclose the MTTase N-terminal domain; sequence LKLHIKTYGC…LPEMINHVRI (118 aa). 6 residues coordinate [4Fe-4S] cluster: Cys-12, Cys-49, Cys-83, Cys-157, Cys-161, and Cys-164. The region spanning 143–375 is the Radical SAM core domain; it reads QAKGPTAFVS…QECIRKQAMK (233 aa). The 64-residue stretch at 378-441 folds into the TRAM domain; the sequence is QAMKGTVQCI…SNSLRGELIS (64 aa).

This sequence belongs to the methylthiotransferase family. MiaB subfamily. In terms of assembly, monomer. [4Fe-4S] cluster is required as a cofactor.

It is found in the cytoplasm. It catalyses the reaction N(6)-dimethylallyladenosine(37) in tRNA + (sulfur carrier)-SH + AH2 + 2 S-adenosyl-L-methionine = 2-methylsulfanyl-N(6)-dimethylallyladenosine(37) in tRNA + (sulfur carrier)-H + 5'-deoxyadenosine + L-methionine + A + S-adenosyl-L-homocysteine + 2 H(+). Functionally, catalyzes the methylthiolation of N6-(dimethylallyl)adenosine (i(6)A), leading to the formation of 2-methylthio-N6-(dimethylallyl)adenosine (ms(2)i(6)A) at position 37 in tRNAs that read codons beginning with uridine. In Baumannia cicadellinicola subsp. Homalodisca coagulata, this protein is tRNA-2-methylthio-N(6)-dimethylallyladenosine synthase.